A 1410-amino-acid polypeptide reads, in one-letter code: Pogo transposable element with ZNF domain (1410 aa).

The segment at 238–291 (RSTVPQSQSQQTKSTPSTSTTPTATQPTSLGQLAVQSPGQSNQTTNPKLAPSFP) is disordered. The segment covering 239–266 (STVPQSQSQQTKSTPSTSTTPTATQPTS) has biased composition (low complexity). A compositionally biased stretch (polar residues) spans 267–284 (LGQLAVQSPGQSNQTTNP). Lys-319 is covalently cross-linked (Glycyl lysine isopeptide (Lys-Gly) (interchain with G-Cter in SUMO2)). The interval 332-361 (QSPGPVVVSNNSSAHGSQRTSGPESSMKVT) is disordered. Ser-333 carries the post-translational modification Phosphoserine. Positions 345–361 (AHGSQRTSGPESSMKVT) are enriched in polar residues. Residue Lys-359 forms a Glycyl lysine isopeptide (Lys-Gly) (interchain with G-Cter in SUMO2) linkage. The residue at position 363 (Ser-363) is a Phosphoserine. The C2H2-type 1; atypical zinc finger occupies 375–397 (KICPRCNAQFRVTEALRGHMCYC). The interval 409–456 (KSLDSEPSVPSAAKPPSPEKTAPVASTPSSTPIPALSPPTKVPEPNEN) is disordered. A Glycyl lysine isopeptide (Lys-Gly) (interchain with G-Cter in SUMO2) cross-link involves residue Lys-422. Ser-425 bears the Phosphoserine mark. Thr-439 bears the Phosphothreonine mark. A Phosphoserine modification is found at Ser-445. Residue Lys-449 forms a Glycyl lysine isopeptide (Lys-Gly) (interchain with G-Cter in SUMO2) linkage. Residue Thr-463 is modified to Phosphothreonine. A Glycyl lysine isopeptide (Lys-Gly) (interchain with G-Cter in SUMO2) cross-link involves residue Lys-489. 6 C2H2-type zinc fingers span residues 494 to 516 (FRCP…MKHH), 530 to 553 (TICQ…ENVH), 560 to 583 (TKCK…KDTH), 590 to 613 (YVCQ…RMIH), 619 to 641 (LLCP…YMRH), and 647 to 670 (YHCN…LQHH). Residue Lys-629 forms a Glycyl lysine isopeptide (Lys-Gly) (interchain with G-Cter in SUMO2) linkage. Lys-677 is covalently cross-linked (Glycyl lysine isopeptide (Lys-Gly) (interchain with G-Cter in SUMO2)). The disordered stretch occupies residues 693–715 (SRGQPRTVPVSSNDTPPSALQEA). A compositionally biased stretch (polar residues) spans 701–710 (PVSSNDTPPS). Residues 771-794 (VHCSLCRYSTCCSRAYANHMINNH) form a C2H2-type 8 zinc finger. A Glycyl lysine isopeptide (Lys-Gly) (interchain with G-Cter in SUMO2) cross-link involves residue Lys-801. The segment at 810-850 (VSGIKLACTSCTFVTSVGDAMAKHLVFNPSHRSSSILPRGL) is required for interaction with CBX5. The C2H2-type 9 zinc finger occupies 815–840 (LACTSCTFVTSVGDAMAKHLVFNPSH). A Phosphoserine modification is found at Ser-856. Disordered stretches follow at residues 857 to 927 (RHGQ…PQAL) and 942 to 969 (VDDQ…GVGK). Over residues 860–870 (QTRDRVHDRNV) the composition is skewed to basic and acidic residues. Lys-883 participates in a covalent cross-link: Glycyl lysine isopeptide (Lys-Gly) (interchain with G-Cter in SUMO2). Residues 892–915 (ATPAEPEELLTPLAPALPSPASTA) show a composition bias toward low complexity. Residues 1015–1085 (GENLEGKYLS…MLRHHLTPHA (71 aa)) form the HTH CENPB-type domain. The DDE-1 domain maps to 1117-1323 (LPLSMIVAID…DCPELVQRSF (207 aa)). Ser-1338 is subject to Phosphoserine. Residues 1340-1360 (TRNADMQEELIASLEEQLKLS) adopt a coiled-coil conformation. A disordered region spans residues 1360 to 1400 (SGEHSESSTPRPRSSPEETIEPESLHQLFEGESETESFYGF). Residues Ser-1364 and Ser-1367 each carry the phosphoserine modification. At Thr-1368 the chain carries Phosphothreonine. Residues Ser-1373 and Ser-1374 each carry the phosphoserine modification. Thr-1378 is modified (phosphothreonine). The short motif at 1380–1404 (EPESLHQLFEGESETESFYGFEEAD) is the Integrase domain-binding motif (IBM) element. At Ser-1392 the chain carries Phosphoserine; by CK2. The residue at position 1394 (Thr-1394) is a Phosphothreonine. Ser-1396 carries the phosphoserine; by CK2 modification.

As to quaternary structure, interacts with CBX1, CBX3, MAD2L2 and CHAMP1. Interacts with CBX5; POGZ competes with PXVXL motif-containing proteins such as INCENP and TRIM28 for interaction with CBX5. Interacts (via IBM motif) with PSIP1 isoform 1 (via IBD domain); phosphorylation increases its affinity for PSIP1. Interacts with HDGFL2. Phosphorylation increases its interaction with PSIP1.

The protein localises to the nucleus. Its subcellular location is the chromosome. The protein resides in the cytoplasm. Plays a role in mitotic cell cycle progression and is involved in kinetochore assembly and mitotic sister chromatid cohesion. Probably through its association with CBX5 plays a role in mitotic chromosome segregation by regulating aurora kinase B/AURKB activation and AURKB and CBX5 dissociation from chromosome arms. Promotes the repair of DNA double-strand breaks through the homologous recombination pathway. The polypeptide is Pogo transposable element with ZNF domain (POGZ) (Homo sapiens (Human)).